A 134-amino-acid chain; its full sequence is Small ribosomal subunit protein uS8c (134 aa).

It belongs to the universal ribosomal protein uS8 family. As to quaternary structure, part of the 30S ribosomal subunit.

The protein localises to the plastid. Its subcellular location is the chloroplast. One of the primary rRNA binding proteins, it binds directly to 16S rRNA central domain where it helps coordinate assembly of the platform of the 30S subunit. The chain is Small ribosomal subunit protein uS8c (rps8) from Chloranthus spicatus (Chulantree).